A 553-amino-acid polypeptide reads, in one-letter code: Copine-9 (553 aa).

C2 domains are found at residues 1–125 (MSLS…ERPL) and 132–255 (KCGT…FTVY). Ca(2+)-binding residues include aspartate 163, aspartate 169, aspartate 225, aspartate 227, and aspartate 233. In terms of domain architecture, VWFA spans 299 to 500 (NFTVAIDFTA…VQFVPFRDYV (202 aa)). The disordered stretch occupies residues 531–553 (TRDIQPRPPPPVSPNPTPAPEQP). Over residues 536 to 553 (PRPPPPVSPNPTPAPEQP) the composition is skewed to pro residues.

Belongs to the copine family. Ca(2+) serves as cofactor.

Probable calcium-dependent phospholipid-binding protein that may play a role in calcium-mediated intracellular processes. Plays a role in dendrite formation by melanocytes. In Mus musculus (Mouse), this protein is Copine-9.